Reading from the N-terminus, the 175-residue chain is MSKKINNNKTPRNKVKNNNVSKDNDDIVISLRYENWVKEERVNSLTTYTKDENQFLKNIIYILNTLFPYVYKNWKNKGINDHCHPIKQNNVFSKYIKLIKKLHPNLLKNDNEELELYQLGLGRSVRVICSKIDNILFPLLIDHHHLGYESQSYNDKDTKKYDYCPLRKYNKNQDN.

Polar residues predominate over residues 1–10; the sequence is MSKKINNNKT. Positions 1 to 21 are disordered; it reads MSKKINNNKTPRNKVKNNNVS.

This is an uncharacterized protein from Ureaplasma parvum serovar 3 (strain ATCC 700970).